Consider the following 273-residue polypeptide: uncharacterized protein (273 aa).

The signal sequence occupies residues 1 to 21; it reads MKILRWLFALVMLIATTEAMA.

To S.typhimurium YadU.

Functionally, part of the yfcOPQRSUV fimbrial operon. Could contribute to adhesion to various surfaces in specific environmental niches. Increases adhesion to eukaryotic T24 bladder epithelial cells in the absence of fim genes. This is an uncharacterized protein from Escherichia coli (strain K12).